Reading from the N-terminus, the 103-residue chain is Integration host factor subunit beta (103 aa).

Residues 62–81 are disordered; sequence RNPKTGESVALPGKHVPHFK.

This sequence belongs to the bacterial histone-like protein family. Heterodimer of an alpha and a beta chain.

Functionally, this protein is one of the two subunits of integration host factor, a specific DNA-binding protein that functions in genetic recombination as well as in transcriptional and translational control. The polypeptide is Integration host factor subunit beta (Xanthomonas axonopodis pv. citri (strain 306)).